The chain runs to 68 residues: Large ribosomal subunit protein uL29 (68 aa).

The protein belongs to the universal ribosomal protein uL29 family.

This chain is Large ribosomal subunit protein uL29, found in Parvibaculum lavamentivorans (strain DS-1 / DSM 13023 / NCIMB 13966).